The chain runs to 130 residues: Small ribosomal subunit protein uS9 (130 aa).

Belongs to the universal ribosomal protein uS9 family.

The polypeptide is Small ribosomal subunit protein uS9 (Pectobacterium atrosepticum (strain SCRI 1043 / ATCC BAA-672) (Erwinia carotovora subsp. atroseptica)).